A 277-amino-acid chain; its full sequence is Nudix hydrolase 10 (277 aa).

Positions 97–235 (WIPEAESTIP…KNDLFKDIHH (139 aa)) constitute a Nudix hydrolase domain. A Nudix box motif is present at residues 142–163 (GVVDEGEEIFAAAIREVKEETG). Residues glutamate 157 and glutamate 161 each coordinate Mg(2+).

The protein belongs to the Nudix hydrolase family. Mg(2+) is required as a cofactor. Mn(2+) serves as cofactor. As to expression, expressed in roots, stems and, at lower level, leaves.

The catalysed reaction is ADP-D-ribose + H2O = D-ribose 5-phosphate + AMP + 2 H(+). It catalyses the reaction NAD(+) + H2O = beta-nicotinamide D-ribonucleotide + AMP + 2 H(+). It carries out the reaction NADH + H2O = reduced beta-nicotinamide D-ribonucleotide + AMP + 2 H(+). Functionally, may mediate the hydrolysis of some nucleoside diphosphate derivatives. In vitro, uses both ADP-ribose and NADH as substrates; however the relevance of such substrates in vivo is unclear. This is Nudix hydrolase 10 (NUDT10) from Arabidopsis thaliana (Mouse-ear cress).